Here is a 1370-residue protein sequence, read N- to C-terminus: DNA-directed RNA polymerase subunit beta (1370 aa).

Belongs to the RNA polymerase beta chain family. The RNAP catalytic core consists of 2 alpha, 1 beta, 1 beta' and 1 omega subunit. When a sigma factor is associated with the core the holoenzyme is formed, which can initiate transcription.

It catalyses the reaction RNA(n) + a ribonucleoside 5'-triphosphate = RNA(n+1) + diphosphate. Its function is as follows. DNA-dependent RNA polymerase catalyzes the transcription of DNA into RNA using the four ribonucleoside triphosphates as substrates. This chain is DNA-directed RNA polymerase subunit beta, found in Bordetella pertussis (strain Tohama I / ATCC BAA-589 / NCTC 13251).